The chain runs to 277 residues: Probable redox regulatory protein ML2435 (277 aa).

It belongs to the Rv0495c family.

Its function is as follows. Essential for maintaining intracellular redox homeostasis. This chain is Probable redox regulatory protein ML2435, found in Mycobacterium leprae (strain TN).